Reading from the N-terminus, the 338-residue chain is Cytochrome f (338 aa).

A signal peptide spans 1 to 45 (MNFKVCSFPSRRQSIAAFVRVLMVILLTLGALVSSDVLLPQPAAA). Heme contacts are provided by Y46, C66, C69, and H70. The chain crosses the membrane as a helical span at residues 300–316 (IAFLAAITLTQILLVLK).

It belongs to the cytochrome f family. In terms of assembly, the 4 large subunits of the cytochrome b6-f complex are cytochrome b6, subunit IV (17 kDa polypeptide, PetD), cytochrome f and the Rieske protein, while the 4 small subunits are PetG, PetL, PetM and PetN. The complex functions as a dimer. Heme serves as cofactor.

The protein resides in the cellular thylakoid membrane. Functionally, component of the cytochrome b6-f complex, which mediates electron transfer between photosystem II (PSII) and photosystem I (PSI), cyclic electron flow around PSI, and state transitions. This is Cytochrome f (petA) from Leptolyngbya laminosa (Phormidium laminosum).